Here is a 1044-residue protein sequence, read N- to C-terminus: Ribonucleoside-diphosphate reductase subunit alpha (1044 aa).

ATP-cone domains are found at residues 9 to 111 (YTIV…KAER), 118 to 217 (IAII…ARAR), and 235 to 325 (YVVQ…ETLG). Substrate is bound by residues Thr440, 455 to 456 (SC), Gly484, 668 to 672 (NLCTE), and 855 to 859 (PTATI). Cysteines 456 and 685 form a disulfide. Asn668 acts as the Proton acceptor in catalysis. Cys670 (cysteine radical intermediate) is an active-site residue. The active-site Proton acceptor is the Glu672.

Belongs to the ribonucleoside diphosphate reductase large chain family. Tetramer of two alpha and two beta subunits.

The enzyme catalyses a 2'-deoxyribonucleoside 5'-diphosphate + [thioredoxin]-disulfide + H2O = a ribonucleoside 5'-diphosphate + [thioredoxin]-dithiol. Its activity is regulated as follows. Under complex allosteric control mediated by deoxynucleoside triphosphates and ATP binding. The type of nucleotide bound at the specificity site determines substrate preference. It seems probable that ATP makes the enzyme reduce CDP and UDP, dGTP favors ADP reduction and dTTP favors GDP reduction. Functionally, provides the precursors necessary for DNA synthesis. Catalyzes the biosynthesis of deoxyribonucleotides from the corresponding ribonucleotides. This chain is Ribonucleoside-diphosphate reductase subunit alpha (nrdA), found in Chlamydia pneumoniae (Chlamydophila pneumoniae).